Consider the following 98-residue polypeptide: Sarcosine oxidase subunit delta (98 aa).

Zn(2+) is bound by residues cysteine 6, cysteine 9, histidine 59, and cysteine 63.

This sequence belongs to the SoxD family. As to quaternary structure, heterotetramer composed of subunits alpha (SoxA), beta (SoxB), gamma (SoxG) and delta (SoxD).

It is found in the cytoplasm. The enzyme catalyses sarcosine + (6S)-5,6,7,8-tetrahydrofolate + O2 = (6R)-5,10-methylene-5,6,7,8-tetrahydrofolate + glycine + H2O2. It catalyses the reaction sarcosine + O2 + H2O = formaldehyde + glycine + H2O2. In terms of biological role, in the presence of tetrahydrofolate, catalyzes the oxidative demethylation of sarcosine to yield glycine, 5,10-methylenetetrahydrofolate and hydrogen peroxide. In the absence of tetrahydrofolate, catalyzes the oxidative demethylation of sarcosine to yield glycine, formaldehyde and hydrogen peroxide. In Corynebacterium sp. (strain P-1), this protein is Sarcosine oxidase subunit delta.